Here is a 125-residue protein sequence, read N- to C-terminus: Cystatin-like cysteine protease inhibitor EPIC2B (125 aa).

The signal sequence occupies residues 1-21 (MSFLRPTLALLAVTALVTTSA). N-linked (GlcNAc...) asparagine glycosylation is present at N45. The Secondary area of contact motif lies at 68-72 (QVVSG).

Belongs to the cystatin family. Interacts with the host papain-like cysteine protease PIP1. Interacts with the host papain-like cysteine protease RCR3. Interacts with the host papain-like cysteine protease C14.

It is found in the secreted. Secreted effector that interacts with and inhibits the pathogenesis-related papain-like cysteine proteases C14, PIP1 and RCR3 of host plants. Inhibition of host proteases by a pathogen extracellular protease inhibitor forms a specific type of defense-counterdefense mechanism between plants and microbial pathogens. This chain is Cystatin-like cysteine protease inhibitor EPIC2B, found in Phytophthora infestans (strain T30-4) (Potato late blight agent).